A 356-amino-acid polypeptide reads, in one-letter code: 4-hydroxy-3-methylbut-2-en-1-yl diphosphate synthase (flavodoxin) (356 aa).

Cys264, Cys267, Cys299, and Glu306 together coordinate [4Fe-4S] cluster.

It belongs to the IspG family. It depends on [4Fe-4S] cluster as a cofactor.

It catalyses the reaction (2E)-4-hydroxy-3-methylbut-2-enyl diphosphate + oxidized [flavodoxin] + H2O + 2 H(+) = 2-C-methyl-D-erythritol 2,4-cyclic diphosphate + reduced [flavodoxin]. It participates in isoprenoid biosynthesis; isopentenyl diphosphate biosynthesis via DXP pathway; isopentenyl diphosphate from 1-deoxy-D-xylulose 5-phosphate: step 5/6. Functionally, converts 2C-methyl-D-erythritol 2,4-cyclodiphosphate (ME-2,4cPP) into 1-hydroxy-2-methyl-2-(E)-butenyl 4-diphosphate. The sequence is that of 4-hydroxy-3-methylbut-2-en-1-yl diphosphate synthase (flavodoxin) from Natranaerobius thermophilus (strain ATCC BAA-1301 / DSM 18059 / JW/NM-WN-LF).